Reading from the N-terminus, the 67-residue chain is Large ribosomal subunit protein bL32 (67 aa).

Residues 1-19 (MAVPKRKMSRSNTRARRSQ) show a composition bias toward basic residues. Residues 1–21 (MAVPKRKMSRSNTRARRSQWK) form a disordered region.

It belongs to the bacterial ribosomal protein bL32 family.

The sequence is that of Large ribosomal subunit protein bL32 from Arthrobacter sp. (strain FB24).